Consider the following 70-residue polypeptide: Cytochrome c oxidase subunit 8B, mitochondrial (70 aa).

The transit peptide at 1–24 (MSRLAPPLRLLQAPLKCWAVPKAH) directs the protein to the mitochondrion. Topologically, residues 25–35 (VSAKPARTPTS) are mitochondrial matrix. Residues 36–59 (PMEQAVGLSVMFVSFLVPSGWVLS) form a helical membrane-spanning segment. Topologically, residues 60 to 70 (HLESYKKSSTT) are mitochondrial intermembrane.

The protein belongs to the cytochrome c oxidase VIII family. As to quaternary structure, component of the cytochrome c oxidase (complex IV, CIV), a multisubunit enzyme composed of 14 subunits. The complex is composed of a catalytic core of 3 subunits MT-CO1, MT-CO2 and MT-CO3, encoded in the mitochondrial DNA, and 11 supernumerary subunits COX4I, COX5A, COX5B, COX6A, COX6B, COX6C, COX7A, COX7B, COX7C, COX8 and NDUFA4, which are encoded in the nuclear genome. The complex exists as a monomer or a dimer and forms supercomplexes (SCs) in the inner mitochondrial membrane with NADH-ubiquinone oxidoreductase (complex I, CI) and ubiquinol-cytochrome c oxidoreductase (cytochrome b-c1 complex, complex III, CIII), resulting in different assemblies (supercomplex SCI(1)III(2)IV(1) and megacomplex MCI(2)III(2)IV(2)).

It is found in the mitochondrion inner membrane. The protein operates within energy metabolism; oxidative phosphorylation. Component of the cytochrome c oxidase, the last enzyme in the mitochondrial electron transport chain which drives oxidative phosphorylation. The respiratory chain contains 3 multisubunit complexes succinate dehydrogenase (complex II, CII), ubiquinol-cytochrome c oxidoreductase (cytochrome b-c1 complex, complex III, CIII) and cytochrome c oxidase (complex IV, CIV), that cooperate to transfer electrons derived from NADH and succinate to molecular oxygen, creating an electrochemical gradient over the inner membrane that drives transmembrane transport and the ATP synthase. Cytochrome c oxidase is the component of the respiratory chain that catalyzes the reduction of oxygen to water. Electrons originating from reduced cytochrome c in the intermembrane space (IMS) are transferred via the dinuclear copper A center (CU(A)) of subunit 2 and heme A of subunit 1 to the active site in subunit 1, a binuclear center (BNC) formed by heme A3 and copper B (CU(B)). The BNC reduces molecular oxygen to 2 water molecules using 4 electrons from cytochrome c in the IMS and 4 protons from the mitochondrial matrix. The polypeptide is Cytochrome c oxidase subunit 8B, mitochondrial (COX8B) (Carlito syrichta (Philippine tarsier)).